The chain runs to 348 residues: Killer cell immunoglobulin-like receptor 2DL2 (348 aa).

The signal sequence occupies residues 1–21; that stretch reads MSLMVVSMACVGFFLLQGAWP. Residues 22 to 245 lie on the Extracellular side of the membrane; that stretch reads HEGVHRKPSL…SKTGNPRHLH (224 aa). Ig-like C2-type domains lie at 42–107 and 142–205; these read EETV…VTHS and GESV…FRDS. 2 disulfide bridges follow: C49–C100 and C149–C198. Residues N84, N178, and N211 are each glycosylated (N-linked (GlcNAc...) asparagine). A helical membrane pass occupies residues 246-264; sequence ILIGTSVVIILFILLFFLL. The Cytoplasmic portion of the chain corresponds to 265 to 348; sequence HRWCSNKKNA…ESRSKVVSCP (84 aa).

Belongs to the immunoglobulin superfamily.

The protein resides in the cell membrane. In terms of biological role, receptor on natural killer (NK) cells for HLA-Cw1, 3, 7, and 8 allotypes. Inhibits the activity of NK cells thus preventing cell lysis. The protein is Killer cell immunoglobulin-like receptor 2DL2 of Homo sapiens (Human).